Reading from the N-terminus, the 166-residue chain is DNA polymerase epsilon subunit C (166 aa).

Positions 112–166 are disordered; sequence SPEIDIESEDEVDEANEPEVGEPEVDEAEVEAEVEAEAAEPETHTLDEPRPESSS. Residues 115-151 are compositionally biased toward acidic residues; the sequence is IDIESEDEVDEANEPEVGEPEVDEAEVEAEVEAEAAE. Over residues 152–166 the composition is skewed to basic and acidic residues; sequence PETHTLDEPRPESSS.

Heterotetramer. Consists of four subunits: POL2, DPB2, DPB3 and DPB4.

Its subcellular location is the nucleus. As accessory component of the DNA polymerase epsilon (DNA polymerase II) participates in chromosomal DNA replication. The polypeptide is DNA polymerase epsilon subunit C (DPB3) (Kluyveromyces lactis (strain ATCC 8585 / CBS 2359 / DSM 70799 / NBRC 1267 / NRRL Y-1140 / WM37) (Yeast)).